The sequence spans 422 residues: Glutamyl-tRNA reductase (422 aa).

Residues T49–R52, S110, E115–Q117, and Q121 each bind substrate. C50 acts as the Nucleophile in catalysis. An NADP(+)-binding site is contributed by G190 to I195.

This sequence belongs to the glutamyl-tRNA reductase family. In terms of assembly, homodimer.

The catalysed reaction is (S)-4-amino-5-oxopentanoate + tRNA(Glu) + NADP(+) = L-glutamyl-tRNA(Glu) + NADPH + H(+). Its pathway is porphyrin-containing compound metabolism; protoporphyrin-IX biosynthesis; 5-aminolevulinate from L-glutamyl-tRNA(Glu): step 1/2. Its function is as follows. Catalyzes the NADPH-dependent reduction of glutamyl-tRNA(Glu) to glutamate 1-semialdehyde (GSA). This chain is Glutamyl-tRNA reductase, found in Colwellia psychrerythraea (strain 34H / ATCC BAA-681) (Vibrio psychroerythus).